A 1270-amino-acid polypeptide reads, in one-letter code: ATP-dependent helicase/nuclease subunit A (1270 aa).

The UvrD-like helicase ATP-binding domain occupies 3-476 (TKWTEEQELA…IMLYKNFRSR (474 aa)). Residue 24–31 (AAAGSGKT) participates in ATP binding. Positions 528 to 823 (IENLKVAGDI…RIMSIHKSKG (296 aa)) constitute a UvrD-like helicase C-terminal domain.

This sequence belongs to the helicase family. AddA subfamily. As to quaternary structure, heterodimer of AddA and AddB/RexB. Requires Mg(2+) as cofactor.

It catalyses the reaction Couples ATP hydrolysis with the unwinding of duplex DNA by translocating in the 3'-5' direction.. The enzyme catalyses ATP + H2O = ADP + phosphate + H(+). Functionally, the heterodimer acts as both an ATP-dependent DNA helicase and an ATP-dependent, dual-direction single-stranded exonuclease. Recognizes the chi site generating a DNA molecule suitable for the initiation of homologous recombination. The AddA nuclease domain is required for chi fragment generation; this subunit has the helicase and 3' -&gt; 5' nuclease activities. The polypeptide is ATP-dependent helicase/nuclease subunit A (Clostridium perfringens (strain SM101 / Type A)).